A 200-amino-acid polypeptide reads, in one-letter code: MDPPSVRSKITEIEGDLFHAPDGAALIHACNCQGSWGKGIAKAFKDKYPAAFAIYRSHCQNLLSSPRYMFEPDLQSEESHARSSRDVRLPEGTALIIPPQKRDSEANGKKHWIICLFTSRGFGRAVSPPDVIVRNTELAVADMTRQLAELQTDQSSREESVGELWSCRFNAGLFGVPWERSRRVLEDAGLEVTVVRPHGG.

The Macro domain occupies 1–200 (MDPPSVRSKI…EVTVVRPHGG (200 aa)). Substrate contacts are provided by residues 15–17 (GDL), 29–31 (ACN), 36–41 (WGKGIA), and 169–175 (FNAGLFG).

The protein belongs to the POA1 family.

The catalysed reaction is ADP-alpha-D-ribose 1''-phosphate + H2O = ADP-D-ribose + phosphate. In terms of biological role, highly specific phosphatase involved in the metabolism of ADP-ribose 1''-phosphate (Appr1p) which is produced as a consequence of tRNA splicing. This Aspergillus fumigatus (strain ATCC MYA-4609 / CBS 101355 / FGSC A1100 / Af293) (Neosartorya fumigata) protein is ADP-ribose 1''-phosphate phosphatase (poa1).